The chain runs to 160 residues: Inner membrane protein YcdZ (160 aa).

5 helical membrane-spanning segments follow: residues 20–42 (WGAV…YFAC), 50–70 (LLIS…IIHG), 72–92 (ALAP…AFLM), 99–119 (LLLS…AGQG), and 123–143 (LVLP…NSGL).

To E.coli YahC.

The protein localises to the cell inner membrane. The sequence is that of Inner membrane protein YcdZ (ycdZ) from Salmonella typhimurium (strain LT2 / SGSC1412 / ATCC 700720).